A 772-amino-acid polypeptide reads, in one-letter code: DNA ligase (772 aa).

Residues 80–84 (DAEYD), 130–131 (SL), and glutamate 160 each bind NAD(+). Lysine 162 (N6-AMP-lysine intermediate) is an active-site residue. NAD(+)-binding residues include arginine 183, glutamate 220, lysine 336, and lysine 360. The Zn(2+) site is built by cysteine 454, cysteine 457, cysteine 473, and cysteine 479. The BRCT domain occupies 685–772 (APEQTLEGLT…NGPQGITTIG (88 aa)).

It belongs to the NAD-dependent DNA ligase family. LigA subfamily. It depends on Mg(2+) as a cofactor. The cofactor is Mn(2+).

The enzyme catalyses NAD(+) + (deoxyribonucleotide)n-3'-hydroxyl + 5'-phospho-(deoxyribonucleotide)m = (deoxyribonucleotide)n+m + AMP + beta-nicotinamide D-nucleotide.. In terms of biological role, DNA ligase that catalyzes the formation of phosphodiester linkages between 5'-phosphoryl and 3'-hydroxyl groups in double-stranded DNA using NAD as a coenzyme and as the energy source for the reaction. It is essential for DNA replication and repair of damaged DNA. This is DNA ligase from Cutibacterium acnes (strain DSM 16379 / KPA171202) (Propionibacterium acnes).